Here is a 231-residue protein sequence, read N- to C-terminus: Orotidine 5'-phosphate decarboxylase (231 aa).

Substrate is bound by residues Asp12, Lys34, 61 to 70, Thr120, Arg181, Gln190, Gly210, and Arg211; that span reads DLKFHDIPNT. The active-site Proton donor is Lys63.

This sequence belongs to the OMP decarboxylase family. Type 1 subfamily. In terms of assembly, homodimer.

It carries out the reaction orotidine 5'-phosphate + H(+) = UMP + CO2. It participates in pyrimidine metabolism; UMP biosynthesis via de novo pathway; UMP from orotate: step 2/2. Catalyzes the decarboxylation of orotidine 5'-monophosphate (OMP) to uridine 5'-monophosphate (UMP). The protein is Orotidine 5'-phosphate decarboxylase of Alcanivorax borkumensis (strain ATCC 700651 / DSM 11573 / NCIMB 13689 / SK2).